Here is a 116-residue protein sequence, read N- to C-terminus: Dolichyl-diphosphooligosaccharide--protein glycosyltransferase subunit DAD1 (116 aa).

At M1–D32 the chain is on the cytoplasmic side. The chain crosses the membrane as a helical span at residues L33–G53. Over S54–P56 the chain is Lumenal. The helical transmembrane segment at F57–L77 threads the bilayer. At R78–R95 the chain is on the cytoplasmic side. The helical transmembrane segment at A96–G116 threads the bilayer.

It belongs to the DAD/OST2 family. In terms of assembly, component of the oligosaccharyltransferase (OST) complex.

It is found in the endoplasmic reticulum membrane. Its pathway is protein modification; protein glycosylation. Subunit of the oligosaccharyl transferase (OST) complex that catalyzes the initial transfer of a defined glycan (Glc(3)Man(9)GlcNAc(2) in eukaryotes) from the lipid carrier dolichol-pyrophosphate to an asparagine residue within an Asn-X-Ser/Thr consensus motif in nascent polypeptide chains, the first step in protein N-glycosylation. N-glycosylation occurs cotranslationally and the complex associates with the Sec61 complex at the channel-forming translocon complex that mediates protein translocation across the endoplasmic reticulum (ER). All subunits are required for a maximal enzyme activity. This chain is Dolichyl-diphosphooligosaccharide--protein glycosyltransferase subunit DAD1 (DAD1), found in Solanum lycopersicum (Tomato).